The chain runs to 375 residues: Dihydroorotate dehydrogenase (quinone) (375 aa).

FMN is bound by residues 78–82 (AGLDK) and Thr-102. Lys-82 serves as a coordination point for substrate. 127–131 (NRMGF) provides a ligand contact to substrate. Residues Asn-159 and Asn-192 each coordinate FMN. Asn-192 is a binding site for substrate. Catalysis depends on Ser-195, which acts as the Nucleophile. Asn-197 lines the substrate pocket. The FMN site is built by Lys-230 and Thr-258. 259 to 260 (NT) contributes to the substrate binding site. Residues Gly-288, Gly-317, and 338 to 339 (YT) contribute to the FMN site.

The protein belongs to the dihydroorotate dehydrogenase family. Type 2 subfamily. In terms of assembly, monomer. The cofactor is FMN.

It is found in the cell membrane. It catalyses the reaction (S)-dihydroorotate + a quinone = orotate + a quinol. It functions in the pathway pyrimidine metabolism; UMP biosynthesis via de novo pathway; orotate from (S)-dihydroorotate (quinone route): step 1/1. Functionally, catalyzes the conversion of dihydroorotate to orotate with quinone as electron acceptor. This chain is Dihydroorotate dehydrogenase (quinone), found in Cyanothece sp. (strain PCC 7425 / ATCC 29141).